Reading from the N-terminus, the 92-residue chain is C-C motif chemokine 22 (92 aa).

The N-terminal stretch at 1-24 (MATLRVPLLVALVLLAVAIQTSDA) is a signal peptide. Intrachain disulfides connect cysteine 36-cysteine 60 and cysteine 37-cysteine 76.

This sequence belongs to the intercrine beta (chemokine CC) family. Expressed by activated splenic B-lymphocytes and dendritic cells. Low expression in lung, thymocytes, lymph node, and unstimulated splenic cells.

It localises to the secreted. Chemotactic for activated T-lymphocytes. May play an important role in the collaboration of dendritic cells and B-lymphocytes with T-cells in immune responses. In Mus musculus (Mouse), this protein is C-C motif chemokine 22 (Ccl22).